We begin with the raw amino-acid sequence, 293 residues long: Small ribosomal subunit protein uS3 (293 aa).

The KH type-2 domain occupies 39–110; the sequence is IRREIMKFLK…KISIKIKEVK (72 aa).

It belongs to the universal ribosomal protein uS3 family. Part of the 30S ribosomal subunit. Forms a tight complex with proteins S10 and S14.

Functionally, binds the lower part of the 30S subunit head. Binds mRNA in the 70S ribosome, positioning it for translation. This Borreliella burgdorferi (strain ATCC 35210 / DSM 4680 / CIP 102532 / B31) (Borrelia burgdorferi) protein is Small ribosomal subunit protein uS3.